We begin with the raw amino-acid sequence, 201 residues long: Large ribosomal subunit protein uL4 (201 aa).

The tract at residues 44-68 (RAQKSRADVSGSGRKPWRQKGTGRA) is disordered.

The protein belongs to the universal ribosomal protein uL4 family. In terms of assembly, part of the 50S ribosomal subunit.

Its function is as follows. One of the primary rRNA binding proteins, this protein initially binds near the 5'-end of the 23S rRNA. It is important during the early stages of 50S assembly. It makes multiple contacts with different domains of the 23S rRNA in the assembled 50S subunit and ribosome. In terms of biological role, forms part of the polypeptide exit tunnel. This Buchnera aphidicola subsp. Schizaphis graminum (strain Sg) protein is Large ribosomal subunit protein uL4.